The chain runs to 904 residues: Nitrate reductase [NADH] 1 (904 aa).

2 stretches are compositionally biased toward polar residues: residues 1–10 (MAASVENRQF) and 39–50 (STNFQKKPNSTI). The segment at 1 to 65 (MAASVENRQF…SSEDDDDDDE (65 aa)) is disordered. The segment covering 56–65 (SSEDDDDDDE) has biased composition (acidic residues). Position 183 (Cys-183) interacts with Mo-molybdopterin. Residues 531 to 606 (SKMYSMSEVR…LEEFRIGELL (76 aa)) enclose the Cytochrome b5 heme-binding domain. 2 residues coordinate heme: His-566 and His-589. The region spanning 647-759 (REKIPCKLID…KGPLGHIEYQ (113 aa)) is the FAD-binding FR-type domain. FAD-binding positions include 699 to 702 (RAYT), 716 to 720 (VVKIY), Phe-721, Phe-728, 733 to 735 (QMS), and Thr-786.

Belongs to the nitrate reductase family. As to quaternary structure, homodimer. FAD is required as a cofactor. Heme serves as cofactor. The cofactor is Mo-molybdopterin.

It carries out the reaction nitrite + NAD(+) + H2O = nitrate + NADH + H(+). Regulated by the nitrogen source and controlled by the circadian rhythm. Functionally, nitrate reductase is a key enzyme involved in the first step of nitrate assimilation in plants, fungi and bacteria. This chain is Nitrate reductase [NADH] 1 (NIA1), found in Nicotiana tabacum (Common tobacco).